A 677-amino-acid chain; its full sequence is Fermitin family homolog 1 (677 aa).

The FERM domain occupies 96–653 (MLRLRLPNLK…HEYIGGYIFL (558 aa)). Phosphoserine is present on residues Ser170, Ser179, and Ser361. The PH domain maps to 377 to 473 (KLFRPKKLLP…WMAACMLASK (97 aa)).

Belongs to the kindlin family. Interacts with the cytoplasmic domain of integrins ITGB1 and ITGB3. As to expression, expressed in brain, skeletal muscle, kidney, colon, adrenal gland, prostate, and placenta. Weakly or not expressed in heart, thymus, spleen, liver, small intestine, bone marrow, lung and peripheral blood leukocytes. Overexpressed in some colon and lung tumors. In skin, it is localized within the epidermis and particularly in basal keratocytes. Not detected in epidermal melanocytes and dermal fibroblasts.

The protein localises to the cytoplasm. It localises to the cytoskeleton. The protein resides in the cell junction. It is found in the focal adhesion. Its subcellular location is the cell projection. The protein localises to the ruffle membrane. Involved in cell adhesion. Contributes to integrin activation. When coexpressed with talin, potentiates activation of ITGA2B. Required for normal keratinocyte proliferation. Required for normal polarization of basal keratinocytes in skin, and for normal cell shape. Required for normal adhesion of keratinocytes to fibronectin and laminin, and for normal keratinocyte migration to wound sites. May mediate TGF-beta 1 signaling in tumor progression. The protein is Fermitin family homolog 1 (FERMT1) of Homo sapiens (Human).